The following is a 513-amino-acid chain: ATP synthase subunit alpha (513 aa).

Residue 169-176 (GDRQTGKT) participates in ATP binding.

Belongs to the ATPase alpha/beta chains family. F-type ATPases have 2 components, CF(1) - the catalytic core - and CF(0) - the membrane proton channel. CF(1) has five subunits: alpha(3), beta(3), gamma(1), delta(1), epsilon(1). CF(0) has three main subunits: a(1), b(2) and c(9-12). The alpha and beta chains form an alternating ring which encloses part of the gamma chain. CF(1) is attached to CF(0) by a central stalk formed by the gamma and epsilon chains, while a peripheral stalk is formed by the delta and b chains.

The protein resides in the cell inner membrane. The enzyme catalyses ATP + H2O + 4 H(+)(in) = ADP + phosphate + 5 H(+)(out). Produces ATP from ADP in the presence of a proton gradient across the membrane. The alpha chain is a regulatory subunit. The polypeptide is ATP synthase subunit alpha (Thiobacillus denitrificans (strain ATCC 25259 / T1)).